The sequence spans 147 residues: UPF0306 protein YhbP (147 aa).

It belongs to the UPF0306 family.

This chain is UPF0306 protein YhbP, found in Salmonella choleraesuis (strain SC-B67).